A 130-amino-acid polypeptide reads, in one-letter code: Small ribosomal subunit protein uS8 (130 aa).

This sequence belongs to the universal ribosomal protein uS8 family. In terms of assembly, part of the 30S ribosomal subunit. Contacts proteins S5 and S12.

Its function is as follows. One of the primary rRNA binding proteins, it binds directly to 16S rRNA central domain where it helps coordinate assembly of the platform of the 30S subunit. In Aeromonas hydrophila subsp. hydrophila (strain ATCC 7966 / DSM 30187 / BCRC 13018 / CCUG 14551 / JCM 1027 / KCTC 2358 / NCIMB 9240 / NCTC 8049), this protein is Small ribosomal subunit protein uS8.